A 634-amino-acid polypeptide reads, in one-letter code: Chaperone protein DnaK (634 aa).

At threonine 199 the chain carries Phosphothreonine; by autocatalysis. A compositionally biased stretch (low complexity) spans 601–618 (AAAGQAQAESGAGAQGNA). A disordered region spans residues 601 to 634 (AAAGQAQAESGAGAQGNAKPDDVVDAEFEEVDKK). Over residues 623 to 634 (VVDAEFEEVDKK) the composition is skewed to acidic residues.

Belongs to the heat shock protein 70 family.

Functionally, acts as a chaperone. This Acidithiobacillus ferrooxidans (strain ATCC 23270 / DSM 14882 / CIP 104768 / NCIMB 8455) (Ferrobacillus ferrooxidans (strain ATCC 23270)) protein is Chaperone protein DnaK.